Consider the following 362-residue polypeptide: NAC domain-containing protein 5 (362 aa).

The region spanning 3–151 is the NAC domain; it reads NPVGFRFRPT…TYTLCKVKFK (149 aa). Residues 107-157 mediate DNA binding; that stretch reads IGEKRVLVFKNHGGSKSDWAMHEYHATFSSPNQIMTYTLCKVKFKGERREF. Residues 240-266 form a disordered region; the sequence is DDRNNHTPQKPLTGVFSDHSTDGSDSD.

The protein resides in the nucleus. In Arabidopsis thaliana (Mouse-ear cress), this protein is NAC domain-containing protein 5 (NAC005).